A 374-amino-acid chain; its full sequence is tRNA-specific 2-thiouridylase MnmA (374 aa).

ATP-binding positions include 12–19 (GMSGGVDS) and M38. The interval 98-100 (NPD) is interaction with target base in tRNA. The Nucleophile role is filled by C103. Residues C103 and C200 are joined by a disulfide bond. G127 provides a ligand contact to ATP. An interaction with tRNA region spans residues 150 to 152 (KDQ). The active-site Cysteine persulfide intermediate is C200. The segment at 311–312 (RY) is interaction with tRNA.

It belongs to the MnmA/TRMU family.

The protein localises to the cytoplasm. It carries out the reaction S-sulfanyl-L-cysteinyl-[protein] + uridine(34) in tRNA + AH2 + ATP = 2-thiouridine(34) in tRNA + L-cysteinyl-[protein] + A + AMP + diphosphate + H(+). Its function is as follows. Catalyzes the 2-thiolation of uridine at the wobble position (U34) of tRNA, leading to the formation of s(2)U34. This Enterococcus faecalis (strain ATCC 700802 / V583) protein is tRNA-specific 2-thiouridylase MnmA.